The primary structure comprises 410 residues: Tryptophan synthase beta chain (410 aa).

Lysine 98 carries the N6-(pyridoxal phosphate)lysine modification.

Belongs to the TrpB family. In terms of assembly, tetramer of two alpha and two beta chains. It depends on pyridoxal 5'-phosphate as a cofactor.

The catalysed reaction is (1S,2R)-1-C-(indol-3-yl)glycerol 3-phosphate + L-serine = D-glyceraldehyde 3-phosphate + L-tryptophan + H2O. It participates in amino-acid biosynthesis; L-tryptophan biosynthesis; L-tryptophan from chorismate: step 5/5. Its function is as follows. The beta subunit is responsible for the synthesis of L-tryptophan from indole and L-serine. This Roseobacter denitrificans (strain ATCC 33942 / OCh 114) (Erythrobacter sp. (strain OCh 114)) protein is Tryptophan synthase beta chain.